Here is a 454-residue protein sequence, read N- to C-terminus: Chromosomal replication initiator protein DnaA (454 aa).

The segment at 1–74 is domain I, interacts with DnaA modulators; that stretch reads MFDLDKFWQF…IQEAYAYADM (74 aa). Positions 74–116 are domain II; sequence MEIQPKFEVAGKEGPERLVTPQPRIKTNQEILENRRDEFAQDL. Residues 117–333 form a domain III, AAA+ region region; the sequence is QLNSKYTFDT…GALVKVQAHA (217 aa). ATP contacts are provided by G161, G163, K164, and T165. The tract at residues 334–454 is domain IV, binds dsDNA; the sequence is TIEREDINVD…VYDLKAMLEH (121 aa).

The protein belongs to the DnaA family. Oligomerizes as a right-handed, spiral filament on DNA at oriC.

It localises to the cytoplasm. Plays an essential role in the initiation and regulation of chromosomal replication. ATP-DnaA binds to the origin of replication (oriC) to initiate formation of the DNA replication initiation complex once per cell cycle. Binds the DnaA box (a 9 base pair repeat at the origin) and separates the double-stranded (ds)DNA. Forms a right-handed helical filament on oriC DNA; dsDNA binds to the exterior of the filament while single-stranded (ss)DNA is stabiized in the filament's interior. The ATP-DnaA-oriC complex binds and stabilizes one strand of the AT-rich DNA unwinding element (DUE), permitting loading of DNA polymerase. After initiation quickly degrades to an ADP-DnaA complex that is not apt for DNA replication. Binds acidic phospholipids. This Lactobacillus johnsonii (strain CNCM I-12250 / La1 / NCC 533) protein is Chromosomal replication initiator protein DnaA.